The chain runs to 312 residues: Olfactory receptor 1500 (312 aa).

Residues 1–25 are Extracellular-facing; the sequence is MTGNNQTLILEFLLLGLPIPSEYHL. Asn5 carries N-linked (GlcNAc...) asparagine glycosylation. The chain crosses the membrane as a helical span at residues 26–49; that stretch reads LFYALFLAMYLTIILGNLLIIVLV. The Cytoplasmic segment spans residues 50–57; that stretch reads RLDSHLHM. The helical transmembrane segment at 58–79 threads the bilayer; the sequence is PMYLFLSNLSFSDLCFSSVTMP. At 80-100 the chain is on the extracellular side; that stretch reads KLLQNMQSQVPSISYTGCLTQ. Cys97 and Cys189 are joined by a disulfide. A helical transmembrane segment spans residues 101 to 120; the sequence is LYFFMVFGDMESFLLVVMAY. Residues 121–139 lie on the Cytoplasmic side of the membrane; it reads DRYVAICFPLRYTTIMSTK. A helical transmembrane segment spans residues 140 to 158; it reads FCASLVLLLWMLTMTHALL. Residues 159 to 196 are Extracellular-facing; it reads HTLLIARLSFCEKNVILHFFCDISALLKLSCSDIYVNE. Residues 197 to 219 traverse the membrane as a helical segment; that stretch reads LMIYILGGLIIIIPFLLIVMSYV. Residues 220 to 236 lie on the Cytoplasmic side of the membrane; it reads RIFFSILKFPSIQDIYK. Residues 237 to 260 traverse the membrane as a helical segment; it reads VFSTCGSHLSVVTLFYGTIFGIYL. Residues 261–272 lie on the Extracellular side of the membrane; the sequence is CPSGNNSTVKEI. The helical transmembrane segment at 273–292 threads the bilayer; the sequence is AMAMMYTVVTPMLNPFIYSL. Residues 293–312 are Cytoplasmic-facing; the sequence is RNRDMKRALIRVICTKKISL.

The protein belongs to the G-protein coupled receptor 1 family. Olfactory epithelium.

It is found in the cell membrane. Its function is as follows. Odorant receptor. The sequence is that of Olfactory receptor 1500 (Olr1500) from Rattus norvegicus (Rat).